A 438-amino-acid chain; its full sequence is Coenzyme A disulfide reductase (438 aa).

Residue 8-33 (GAVAGGATCASQIRRLDKESDIIIFE) coordinates FAD. Thr-15, Gln-19, Arg-22, Ser-39, and Asn-42 together coordinate substrate. Residue Cys-43 is the Nucleophile of the active site. Catalysis depends on Cys-43, which acts as the Redox-active. A substrate-binding site is contributed by Lys-71. An NADP(+)-binding site is contributed by 151 to 166 (VLVVGAGYVSLEVLEN). 267-277 (TNVPNIYVIGD) is a binding site for FAD. His-299 serves as a coordination point for substrate. Tyr-419 contacts FAD. Residue Lys-427 coordinates substrate.

The protein belongs to the class-III pyridine nucleotide-disulfide oxidoreductase family. In terms of assembly, homodimer. FAD is required as a cofactor.

It catalyses the reaction NADP(+) + 2 CoA = CoA-disulfide + NADPH + H(+). Functionally, catalyzes specifically the NADPH-dependent reduction of coenzyme A disulfide. This Staphylococcus aureus (strain MRSA252) protein is Coenzyme A disulfide reductase.